The chain runs to 255 residues: Hemin import ATP-binding protein HmuV (255 aa).

The ABC transporter domain occupies 2–238 (LQVEGLYLCR…AALKAVYGID (237 aa)). 34 to 41 (GPNGAGKS) is an ATP binding site.

Belongs to the ABC transporter superfamily. Heme (hemin) importer (TC 3.A.1.14.5) family. In terms of assembly, the complex is composed of two ATP-binding proteins (HmuV), two transmembrane proteins (HmuU) and a solute-binding protein (HmuT).

It is found in the cell inner membrane. In terms of biological role, part of the ABC transporter complex HmuTUV involved in hemin import. Responsible for energy coupling to the transport system. The sequence is that of Hemin import ATP-binding protein HmuV from Pseudomonas putida (strain ATCC 47054 / DSM 6125 / CFBP 8728 / NCIMB 11950 / KT2440).